The chain runs to 280 residues: 4-hydroxy-3-methylbut-2-enyl diphosphate reductase (280 aa).

[4Fe-4S] cluster is bound at residue Cys12. Residues His40 and His72 each coordinate (2E)-4-hydroxy-3-methylbut-2-enyl diphosphate. Residues His40 and His72 each coordinate dimethylallyl diphosphate. 2 residues coordinate isopentenyl diphosphate: His40 and His72. Cys94 contacts [4Fe-4S] cluster. His122 provides a ligand contact to (2E)-4-hydroxy-3-methylbut-2-enyl diphosphate. His122 contacts dimethylallyl diphosphate. Residue His122 coordinates isopentenyl diphosphate. The Proton donor role is filled by Glu124. A (2E)-4-hydroxy-3-methylbut-2-enyl diphosphate-binding site is contributed by Thr160. Residue Cys188 participates in [4Fe-4S] cluster binding. (2E)-4-hydroxy-3-methylbut-2-enyl diphosphate is bound by residues Ser216, Asn218, and Ser260. Dimethylallyl diphosphate-binding residues include Ser216, Asn218, and Ser260. Positions 216, 218, and 260 each coordinate isopentenyl diphosphate.

The protein belongs to the IspH family. [4Fe-4S] cluster serves as cofactor.

It catalyses the reaction isopentenyl diphosphate + 2 oxidized [2Fe-2S]-[ferredoxin] + H2O = (2E)-4-hydroxy-3-methylbut-2-enyl diphosphate + 2 reduced [2Fe-2S]-[ferredoxin] + 2 H(+). The enzyme catalyses dimethylallyl diphosphate + 2 oxidized [2Fe-2S]-[ferredoxin] + H2O = (2E)-4-hydroxy-3-methylbut-2-enyl diphosphate + 2 reduced [2Fe-2S]-[ferredoxin] + 2 H(+). Its pathway is isoprenoid biosynthesis; dimethylallyl diphosphate biosynthesis; dimethylallyl diphosphate from (2E)-4-hydroxy-3-methylbutenyl diphosphate: step 1/1. It participates in isoprenoid biosynthesis; isopentenyl diphosphate biosynthesis via DXP pathway; isopentenyl diphosphate from 1-deoxy-D-xylulose 5-phosphate: step 6/6. Its function is as follows. Catalyzes the conversion of 1-hydroxy-2-methyl-2-(E)-butenyl 4-diphosphate (HMBPP) into a mixture of isopentenyl diphosphate (IPP) and dimethylallyl diphosphate (DMAPP). Acts in the terminal step of the DOXP/MEP pathway for isoprenoid precursor biosynthesis. The polypeptide is 4-hydroxy-3-methylbut-2-enyl diphosphate reductase (Trichlorobacter lovleyi (strain ATCC BAA-1151 / DSM 17278 / SZ) (Geobacter lovleyi)).